Reading from the N-terminus, the 140-residue chain is Large ribosomal subunit protein uL14 (140 aa).

Belongs to the universal ribosomal protein uL14 family. Part of the 50S ribosomal subunit. Forms a cluster with proteins L3 and L24e, part of which may contact the 16S rRNA in 2 intersubunit bridges.

Its function is as follows. Binds to 23S rRNA. Forms part of two intersubunit bridges in the 70S ribosome. The sequence is that of Large ribosomal subunit protein uL14 from Nitrosopumilus maritimus (strain SCM1).